Reading from the N-terminus, the 272-residue chain is Tryptophan synthase alpha chain (272 aa).

Active-site proton acceptor residues include Glu49 and Asp60.

The protein belongs to the TrpA family. Tetramer of two alpha and two beta chains.

It carries out the reaction (1S,2R)-1-C-(indol-3-yl)glycerol 3-phosphate + L-serine = D-glyceraldehyde 3-phosphate + L-tryptophan + H2O. It participates in amino-acid biosynthesis; L-tryptophan biosynthesis; L-tryptophan from chorismate: step 5/5. Its function is as follows. The alpha subunit is responsible for the aldol cleavage of indoleglycerol phosphate to indole and glyceraldehyde 3-phosphate. The sequence is that of Tryptophan synthase alpha chain from Hydrogenovibrio crunogenus (strain DSM 25203 / XCL-2) (Thiomicrospira crunogena).